Reading from the N-terminus, the 471-residue chain is tRNA-2-methylthio-N(6)-dimethylallyladenosine synthase (471 aa).

Residues 29–146 (KKFHIKTYGC…LPELIAKVNR (118 aa)) enclose the MTTase N-terminal domain. Cys38, Cys74, Cys109, Cys187, Cys191, and Cys194 together coordinate [4Fe-4S] cluster. Residues 173-405 (RVPQSSAFLS…QQLLKEKQLE (233 aa)) form the Radical SAM core domain. The region spanning 408–467 (KKMIGKTVTVLFDKKHPDKISGRTEYMQQVFSDDSNLLDKIVTMRVEDASTFTLKCTAED) is the TRAM domain.

This sequence belongs to the methylthiotransferase family. MiaB subfamily. Monomer. The cofactor is [4Fe-4S] cluster.

The protein localises to the cytoplasm. It catalyses the reaction N(6)-dimethylallyladenosine(37) in tRNA + (sulfur carrier)-SH + AH2 + 2 S-adenosyl-L-methionine = 2-methylsulfanyl-N(6)-dimethylallyladenosine(37) in tRNA + (sulfur carrier)-H + 5'-deoxyadenosine + L-methionine + A + S-adenosyl-L-homocysteine + 2 H(+). In terms of biological role, catalyzes the methylthiolation of N6-(dimethylallyl)adenosine (i(6)A), leading to the formation of 2-methylthio-N6-(dimethylallyl)adenosine (ms(2)i(6)A) at position 37 in tRNAs that read codons beginning with uridine. The chain is tRNA-2-methylthio-N(6)-dimethylallyladenosine synthase from Neorickettsia sennetsu (strain ATCC VR-367 / Miyayama) (Ehrlichia sennetsu).